The sequence spans 329 residues: MAGRRSSNVFPLSGNSGGGLEVDTPTWLSSQAATSRLMVRPSMGPGICPGPEVWGVPLGSSPYEFRGGIAPYRACEARAWSQSSSEDTCPGPYIALRYMPNLALPEDVSAIQKEMEQLAKELRQKRMTLGYSQADVGFAVGAMFGKVLSQTTICRFEAQQLSLANMWKLRPLLKMWLEEVDEKNLLGICRMEMILEQARKRRRASRERRIGSNLEKLFLQCPEPTPQQISYIAGRLRLQKDLVQVWFSNRSQMGSWPTNDTSRREDVGATGSPFPGPPVCFPMAPGLHFDFTHYEGSCLTPLYSSTPFPVRGALLSAPTTTLGLPRLSS.

Polar residues predominate over residues 1 to 14 (MAGRRSSNVFPLSG). Positions 1-24 (MAGRRSSNVFPLSGNSGGGLEVDT) are disordered. The 75-residue stretch at 107-181 (DVSAIQKEME…LLKMWLEEVD (75 aa)) folds into the POU-specific domain. Residues 199-258 (RKRRRASRERRIGSNLEKLFLQCPEPTPQQISYIAGRLRLQKDLVQVWFSNRSQMGSWPT) constitute a DNA-binding region (homeobox).

This sequence belongs to the POU transcription factor family. Class-5 subfamily. In terms of tissue distribution, in adult brain, expressed in the olfactory bulb, becoming specifically concentrated in the mitral cell layer. Also found in the pyramidal cell layer of the hippocampus, in the granule cell layer of the cerebellum and in the cortex.

It is found in the nucleus. Functionally, transcription factor that binds preferentially to the octamer motif (5'-ATGTTAAT-3'). May exert a regulatory function in meiotic events that are required for terminal differentiation of male germ cell. In Mus musculus (Mouse), this protein is POU domain, class 5, transcription factor 2 (Pou5f2).